A 199-amino-acid chain; its full sequence is LPICPSGSVNCQVSLGELFDRAVKLSHYIHFLSSEMFNEFDERYAQGRGFITKAVNGCHNASLTTPEDKEQAQQIHHEDLLNLVLGVLRSWNDPLLHLVTEVQRIKEAPDTILWKAVEIEEQNKRLLEGMEKIIGRVQPGDTGNEVYSRWSGLPSLQLADEDSRLFAFYNLLHCGRRDSHKIDNYLKLLKCRLIHDSNC.

Disulfide bonds link Cys-4–Cys-11, Cys-58–Cys-174, and Cys-191–Cys-199. Asn-60 is a glycosylation site (N-linked (GlcNAc...) asparagine).

It belongs to the somatotropin/prolactin family. In terms of processing, glycosylated.

The protein localises to the secreted. This Crocodylus novaeguineae (Crocodile) protein is Prolactin-1.